Consider the following 91-residue polypeptide: Ice-structuring protein 2A7 (91 aa).

A signal peptide spans methionine 1–threonine 21. Residues glutamate 22–aspartate 39 constitute a propeptide, removed by a dipeptidylpeptidase.

This sequence belongs to the type-I AFP family. In terms of tissue distribution, detected in blood serum (at protein level).

It is found in the secreted. Its function is as follows. Contributes to protect fish blood from freezing at subzero sea water temperatures. Lowers the blood freezing point. Binds to nascent ice crystals and prevents further growth. This Pseudopleuronectes americanus (Winter flounder) protein is Ice-structuring protein 2A7.